The primary structure comprises 334 residues: Type IV inositol polyphosphate 5-phosphatase 11 (334 aa).

Catalytic stretches follow at residues 206-222 (DLTVWLGDLNYRIQDVS) and 282-297 (KIRVPAWTDRILFKIQ).

The protein belongs to the inositol polyphosphate 5-phosphatase family. Expressed ubiquitously.

It localises to the cell membrane. The enzyme catalyses a 1,2-diacyl-sn-glycero-3-phospho-(1D-myo-inositol-4,5-bisphosphate) + H2O = a 1,2-diacyl-sn-glycero-3-phospho-(1D-myo-inositol 4-phosphate) + phosphate. The catalysed reaction is a 1,2-diacyl-sn-glycero-3-phospho-(1D-myo-inositol-3,4,5-trisphosphate) + H2O = a 1,2-diacyl-sn-glycero-3-phospho-(1D-myo-inositol-3,4-bisphosphate) + phosphate. Its function is as follows. Has phosphatase activity toward PtdIns(4,5)P2, and in vitro toward PtdIns(3,5)P2 and PtdIns(3,4,5)P3. Cannot dephosphorylate PtdIns(5)P, Ins(1,4,5)P3 and Ins(1,3,4,5)P4. This Arabidopsis thaliana (Mouse-ear cress) protein is Type IV inositol polyphosphate 5-phosphatase 11.